Reading from the N-terminus, the 299-residue chain is tRNA dimethylallyltransferase (299 aa).

11-18 (GPTAVGKT) is an ATP binding site. 13-18 (TAVGKT) is a substrate binding site. Residues 36-39 (DSQQ) form an interaction with substrate tRNA region.

Belongs to the IPP transferase family. As to quaternary structure, monomer. Mg(2+) serves as cofactor.

The catalysed reaction is adenosine(37) in tRNA + dimethylallyl diphosphate = N(6)-dimethylallyladenosine(37) in tRNA + diphosphate. In terms of biological role, catalyzes the transfer of a dimethylallyl group onto the adenine at position 37 in tRNAs that read codons beginning with uridine, leading to the formation of N6-(dimethylallyl)adenosine (i(6)A). This is tRNA dimethylallyltransferase from Streptococcus pyogenes serotype M49 (strain NZ131).